The following is a 361-amino-acid chain: DNA replication and repair protein RecF (361 aa).

Residue 30–37 (GDNAQGKT) participates in ATP binding.

It belongs to the RecF family.

It is found in the cytoplasm. Functionally, the RecF protein is involved in DNA metabolism; it is required for DNA replication and normal SOS inducibility. RecF binds preferentially to single-stranded, linear DNA. It also seems to bind ATP. In Clostridium perfringens (strain ATCC 13124 / DSM 756 / JCM 1290 / NCIMB 6125 / NCTC 8237 / Type A), this protein is DNA replication and repair protein RecF.